A 314-amino-acid chain; its full sequence is Olfactory receptor 1E5 (314 aa).

Residues 1–25 (MMGQNQTSISDFLLLGLPIQPEQQN) are Extracellular-facing. Residue N5 is glycosylated (N-linked (GlcNAc...) asparagine). Residues 26-49 (LCYALFLAMYLTTLLGNLLIIVLI) traverse the membrane as a helical segment. The Cytoplasmic segment spans residues 50–57 (RLDSHLHT). Residues 58-79 (PMYLFLSNLSFSDLCFSSVTIP) traverse the membrane as a helical segment. The Extracellular segment spans residues 80–100 (KLLQNMQNQDPSIPYADCLTQ). A disulfide bridge connects residues C97 and C189. A helical transmembrane segment spans residues 101-120 (MYFFLLFGDLESFLLVAMAY). The Cytoplasmic portion of the chain corresponds to 121 to 139 (DRYVAICFPLHYTAIMSPM). Residues 140-158 (LCLSLVALSWVLTTFHAML) form a helical membrane-spanning segment. The Extracellular portion of the chain corresponds to 159 to 196 (HTLLMARLCFCADNVIPHFFCDMSALLKLACSDTRVNE). Residues 197 to 219 (WVIFIMGGLIVVIPFLLILGSYA) form a helical membrane-spanning segment. Topologically, residues 220-236 (RIVSSILKVPSSKGICK) are cytoplasmic. A helical membrane pass occupies residues 237 to 260 (AFSTCGSHLSVVSLFYGTIIGLYL). Topologically, residues 261 to 272 (CPSANSSTLKET) are extracellular. A glycan (N-linked (GlcNAc...) asparagine) is linked at N265. The chain crosses the membrane as a helical span at residues 273–292 (VMAMMYTVVTPMLNPFIYSL). Residues 293 to 314 (RNRDMKGALERVIXKRKNPFLL) lie on the Cytoplasmic side of the membrane.

The protein belongs to the G-protein coupled receptor 1 family.

It is found in the cell membrane. Its function is as follows. Odorant receptor. The protein is Olfactory receptor 1E5 (OR1E5) of Pan troglodytes (Chimpanzee).